The following is a 482-amino-acid chain: Zinc finger CCCH domain-containing protein 40 (482 aa).

The C3H1-type zinc-finger motif lies at 157-184; the sequence is RNRAHVCSFYVRGECTRGAECPYRHEMP. The RRM domain occupies 228–301; that stretch reads RTLYIGGLNN…IRLKLMWGKP (74 aa). Low complexity-rich tracts occupy residues 329 to 347 and 389 to 428; these read SQQQSGDQPQPPGMEGQQQ and PGPQQAAQAQASSSSGQSYPMPPQYYHGQYPPYYPPYGGY. Residues 329-482 are disordered; the sequence is SQQQSGDQPQ…VPPPQQTTQN (154 aa). The segment covering 429 to 446 has biased composition (pro residues); the sequence is MPPPRMPYPPPPQYPPYQ. The segment covering 452–466 has biased composition (low complexity); sequence PAQSQASSSQQPAPA. The segment covering 473 to 482 has biased composition (pro residues); the sequence is VPPPQQTTQN.

This chain is Zinc finger CCCH domain-containing protein 40, found in Oryza sativa subsp. japonica (Rice).